Here is a 244-residue protein sequence, read N- to C-terminus: NAD(P)H-quinone oxidoreductase subunit K (244 aa).

Positions 51, 52, 116, and 147 each coordinate [4Fe-4S] cluster.

This sequence belongs to the complex I 20 kDa subunit family. In terms of assembly, NDH-1 can be composed of about 15 different subunits; different subcomplexes with different compositions have been identified which probably have different functions. [4Fe-4S] cluster is required as a cofactor.

The protein localises to the cellular thylakoid membrane. It carries out the reaction a plastoquinone + NADH + (n+1) H(+)(in) = a plastoquinol + NAD(+) + n H(+)(out). It catalyses the reaction a plastoquinone + NADPH + (n+1) H(+)(in) = a plastoquinol + NADP(+) + n H(+)(out). In terms of biological role, NDH-1 shuttles electrons from an unknown electron donor, via FMN and iron-sulfur (Fe-S) centers, to quinones in the respiratory and/or the photosynthetic chain. The immediate electron acceptor for the enzyme in this species is believed to be plastoquinone. Couples the redox reaction to proton translocation, and thus conserves the redox energy in a proton gradient. Cyanobacterial NDH-1 also plays a role in inorganic carbon-concentration. This Synechococcus sp. (strain JA-2-3B'a(2-13)) (Cyanobacteria bacterium Yellowstone B-Prime) protein is NAD(P)H-quinone oxidoreductase subunit K.